A 137-amino-acid chain; its full sequence is Large ribosomal subunit protein uL22c (137 aa).

Belongs to the universal ribosomal protein uL22 family. As to quaternary structure, part of the 50S ribosomal subunit.

It is found in the plastid. The protein resides in the chloroplast. In terms of biological role, this protein binds specifically to 23S rRNA. The globular domain of the protein is located near the polypeptide exit tunnel on the outside of the subunit, while an extended beta-hairpin is found that lines the wall of the exit tunnel in the center of the 70S ribosome. In Oenothera argillicola (Appalachian evening primrose), this protein is Large ribosomal subunit protein uL22c (rpl22).